The sequence spans 442 residues: tRNA-2-methylthio-N(6)-dimethylallyladenosine synthase (442 aa).

The region spanning 5 to 122 (KKVFIKTLGC…LPEMIKQKQK (118 aa)) is the MTTase N-terminal domain. Cys-14, Cys-51, Cys-85, Cys-159, Cys-163, and Cys-166 together coordinate [4Fe-4S] cluster. The 234-residue stretch at 145 to 378 (KAEGAKAYVS…DLLNSNAQII (234 aa)) folds into the Radical SAM core domain. A TRAM domain is found at 380-442 (RQMVGTNQRI…LPNSLRGELI (63 aa)).

It belongs to the methylthiotransferase family. MiaB subfamily. In terms of assembly, monomer. It depends on [4Fe-4S] cluster as a cofactor.

It localises to the cytoplasm. It catalyses the reaction N(6)-dimethylallyladenosine(37) in tRNA + (sulfur carrier)-SH + AH2 + 2 S-adenosyl-L-methionine = 2-methylsulfanyl-N(6)-dimethylallyladenosine(37) in tRNA + (sulfur carrier)-H + 5'-deoxyadenosine + L-methionine + A + S-adenosyl-L-homocysteine + 2 H(+). Its function is as follows. Catalyzes the methylthiolation of N6-(dimethylallyl)adenosine (i(6)A), leading to the formation of 2-methylthio-N6-(dimethylallyl)adenosine (ms(2)i(6)A) at position 37 in tRNAs that read codons beginning with uridine. This Francisella tularensis subsp. tularensis (strain FSC 198) protein is tRNA-2-methylthio-N(6)-dimethylallyladenosine synthase.